Consider the following 421-residue polypeptide: Shaggy-related protein kinase kappa (421 aa).

Positions 1 to 10 (MASSGLGNGV) are enriched in gly residues. The segment at 1 to 60 (MASSGLGNGVGTSRSAKGLKSSSSSVDWLTRDLAETRIRDKVETDDERDSEPDIIDGAGA) is disordered. Positions 29–42 (LTRDLAETRIRDKV) are enriched in basic and acidic residues. Over residues 43–54 (ETDDERDSEPDI) the composition is skewed to acidic residues. In terms of domain architecture, Protein kinase spans 83-367 (YISEHVVGTG…ALEACIHPLF (285 aa)). ATP contacts are provided by residues 89-97 (VGTGSFGMV) and Lys-112. Residue Asp-208 is the Proton acceptor of the active site. The residue at position 243 (Tyr-243) is a Phosphotyrosine.

This sequence belongs to the protein kinase superfamily. CMGC Ser/Thr protein kinase family. GSK-3 subfamily. Post-translationally, autophosphorylated mainly on threonine and serine residues. In terms of tissue distribution, expressed exclusively in inflorescences.

It carries out the reaction L-seryl-[protein] + ATP = O-phospho-L-seryl-[protein] + ADP + H(+). The catalysed reaction is L-threonyl-[protein] + ATP = O-phospho-L-threonyl-[protein] + ADP + H(+). Its function is as follows. May mediate extracellular signals to regulate transcription in differentiating cells. The polypeptide is Shaggy-related protein kinase kappa (ASK10) (Arabidopsis thaliana (Mouse-ear cress)).